The following is a 474-amino-acid chain: MTSLPGRGVSPSSSDPLCEGNAAPSSSSSSGQDLKQLKNSILSCVFSSPFSIFEAHQDSSANRSLKPHSGSYAWSRFLRRIACTGSMWRFLGASKALTSSDVWFLGKCYKLSSEELSNSSDCESGNAAFLEDFSSRIWITYRKGFDAISDSKYTSDVNWGCMVRSSQMLVAQALIFHHLGRSWRKPSQKPYSPEYIGILHMFGDSEACAFSIHNLLQAGKSYGLAAGSWVGPYAMCRAWQTLVCTNREHHEAVDGNGNFPMALYVVSGDEDGERGGAPVVCIDVAAQLCCDFNKNQSTWSPILLLVPLVLGLDKLNPRYIPLLKETLTFPQSLGILGGKPGTSTYIAGVQDDRALYLDPHEVQLAVDIAADNLEAGTSSYHCSTVRDLALDLIDPSLAIGFYCRDKDDFDDFCSRASELVDKANGAPLFTVVQSVQPSKQMYNEESSSGDGMDSINVEGLDGSGETGEEEWQIL.

Residues 1-32 are disordered; that stretch reads MTSLPGRGVSPSSSDPLCEGNAAPSSSSSSGQ. The active-site Nucleophile is cysteine 161. Catalysis depends on residues aspartate 358 and histidine 360. Polar residues predominate over residues 439-449; sequence KQMYNEESSSG. The interval 439 to 474 is disordered; the sequence is KQMYNEESSSGDGMDSINVEGLDGSGETGEEEWQIL.

The protein belongs to the peptidase C54 family. Interacts with ATG8.

The protein resides in the cytoplasm. It catalyses the reaction [protein]-C-terminal L-amino acid-glycyl-phosphatidylethanolamide + H2O = [protein]-C-terminal L-amino acid-glycine + a 1,2-diacyl-sn-glycero-3-phosphoethanolamine. Cysteine protease that plays a key role in autophagy by mediating both proteolytic activation and delipidation of ATG8 family proteins. The protease activity is required for proteolytic activation of ATG8 family proteins: cleaves the C-terminal amino acid of ATG8 proteins to reveal a C-terminal glycine. Exposure of the glycine at the C-terminus is essential for ATG8 proteins conjugation to phosphatidylethanolamine (PE) and insertion to membranes, which is necessary for autophagy. In addition to the protease activity, also mediates delipidation of PE-conjugated ATG8 proteins. In Oryza sativa subsp. japonica (Rice), this protein is Cysteine protease ATG4A (ATG4A).